Consider the following 641-residue polypeptide: DEAD-box ATP-dependent RNA helicase 50 (641 aa).

Disordered stretches follow at residues 86-115 (SMPS…IGNF), 129-189 (RSAH…LNSV), and 197-216 (DDLD…WGNI). Residues 150-159 (PSDESDEDGT) are compositionally biased toward acidic residues. Positions 240–268 (RSFKEIGCSDEILGALRSFGFPRPSHIQA) match the Q motif motif. Residues 271–452 (YRPVLEGKSC…VETFPDCELI (182 aa)) form the Helicase ATP-binding domain. 284–291 (DQSGSGKT) contacts ATP. The short motif at 399-402 (DEVD) is the DEAD box element. Residues 487 to 641 (NKKSALVKII…GHPLHDVPCV (155 aa)) form the Helicase C-terminal domain.

This sequence belongs to the DEAD box helicase family.

The enzyme catalyses ATP + H2O = ADP + phosphate + H(+). Its function is as follows. Probably involved in resistance to biotic and abiotic stresses. Confers tolerance to oxidative stress and mediates pathogenesis-related (PR) genes expression. Exhibits RNA-dependent ATPase and ATP-dependent RNA helicase activities in vitro. The polypeptide is DEAD-box ATP-dependent RNA helicase 50 (Oryza sativa subsp. japonica (Rice)).